A 362-amino-acid chain; its full sequence is Ferredoxin--NADP reductase, leaf-type isozyme, chloroplastic (362 aa).

The disordered stretch occupies residues 1–20; sequence MATAVSAAVSLPSSKSTSFS. The N-terminal 62 residues, 1–62, are a transit peptide targeting the chloroplast; the sequence is MATAVSAAVS…RAQVTTEAPA (62 aa). Low complexity predominate over residues 10 to 20; that stretch reads SLPSSKSTSFS. Residues 83-205 enclose the FAD-binding FR-type domain; the sequence is KEPYVGRCLL…TGPVGKEMLM (123 aa). FAD contacts are provided by residues 141-144, 162-164, Y168, 179-181, and T220; these read RLYS, CVK, and VCS. NADP(+) is bound by residues S144 and K164. NADP(+) is bound by residues T220, 252–253, 282–283, K292, 321–322, and E360; these read VP, SR, and GL.

Belongs to the ferredoxin--NADP reductase type 1 family. FAD serves as cofactor.

The protein localises to the plastid. The protein resides in the chloroplast stroma. Its subcellular location is the chloroplast thylakoid membrane. The catalysed reaction is 2 reduced [2Fe-2S]-[ferredoxin] + NADP(+) + H(+) = 2 oxidized [2Fe-2S]-[ferredoxin] + NADPH. It functions in the pathway energy metabolism; photosynthesis. In terms of biological role, may play a key role in regulating the relative amounts of cyclic and non-cyclic electron flow to meet the demands of the plant for ATP and reducing power. This Nicotiana tabacum (Common tobacco) protein is Ferredoxin--NADP reductase, leaf-type isozyme, chloroplastic (PETH).